The chain runs to 210 residues: Phosphoribosyl-dephospho-CoA transferase (210 aa).

Active-site residues include D135 and D137.

It belongs to the MdcG family.

It catalyses the reaction apo-[malonate decarboxylase ACP] + 2'-(5''-triphospho-alpha-D-ribosyl)-3'-dephospho-CoA = holo-[malonate decarboxylase ACP] + diphosphate. Its function is as follows. Transfers 2'-(5-triphosphoribosyl)-3'-dephosphocoenzyme-A to the apo-[acyl-carrier-protein] of the malonate decarboxylase to yield holo-[acyl-carrier-protein]. This chain is Phosphoribosyl-dephospho-CoA transferase, found in Pseudomonas aeruginosa (strain ATCC 15692 / DSM 22644 / CIP 104116 / JCM 14847 / LMG 12228 / 1C / PRS 101 / PAO1).